Reading from the N-terminus, the 123-residue chain is Protein Rev (123 aa).

Phosphoserine; by host CK2 is present on residues serine 5 and serine 8. Residues isoleucine 18 to asparagine 26 form a homomultimerization region. Disordered stretches follow at residues glutamine 24–glutamine 49 and threonine 82–asparagine 123. A Nuclear localization signal and RNA-binding (RRE) motif is present at residues serine 34–arginine 50. The segment covering glutamine 36 to glutamine 49 has biased composition (basic residues). The Nuclear export signal and binding to XPO1 motif lies at leucine 73–aspartate 84. The segment covering proline 97–glycine 112 has biased composition (polar residues).

The protein belongs to the HIV-1 REV protein family. Homomultimer; when bound to the RRE. Multimeric assembly is essential for activity and may involve XPO1. Binds to human KPNB1, XPO1, TNPO1, RANBP5 and IPO7. Interacts with the viral Integrase. Interacts with human KHDRBS1. Interacts with human NAP1; this interaction decreases Rev multimerization and stimulates its activity. Interacts with human DEAD-box helicases DDX3 and DDX24; these interactions may serve for viral RNA export to the cytoplasm and packaging, respectively. Interacts with human PSIP1; this interaction may inhibit HIV-1 DNA integration by promoting dissociation of the Integrase-LEDGF/p75 complex. Post-translationally, asymmetrically arginine dimethylated at one site by host PRMT6. Methylation impairs the RNA-binding activity and export of viral RNA from the nucleus to the cytoplasm. In terms of processing, phosphorylated by protein kinase CK2. Presence of, and maybe binding to the N-terminus of the regulatory beta subunit of CK2 is necessary for CK2-mediated Rev's phosphorylation.

Its subcellular location is the host nucleus. It localises to the host nucleolus. It is found in the host cytoplasm. In terms of biological role, escorts unspliced or incompletely spliced viral pre-mRNAs (late transcripts) out of the nucleus of infected cells. These pre-mRNAs carry a recognition sequence called Rev responsive element (RRE) located in the env gene, that is not present in fully spliced viral mRNAs (early transcripts). This function is essential since most viral proteins are translated from unspliced or partially spliced pre-mRNAs which cannot exit the nucleus by the pathway used by fully processed cellular mRNAs. Rev itself is translated from a fully spliced mRNA that readily exits the nucleus. Rev's nuclear localization signal (NLS) binds directly to KPNB1/Importin beta-1 without previous binding to KPNA1/Importin alpha-1. KPNB1 binds to the GDP bound form of RAN (Ran-GDP) and targets Rev to the nucleus. In the nucleus, the conversion from Ran-GDP to Ran-GTP dissociates Rev from KPNB1 and allows Rev's binding to the RRE in viral pre-mRNAs. Rev multimerization on the RRE via cooperative assembly exposes its nuclear export signal (NES) to the surface. Rev can then form a complex with XPO1/CRM1 and Ran-GTP, leading to nuclear export of the complex. Conversion from Ran-GTP to Ran-GDP mediates dissociation of the Rev/RRE/XPO1/RAN complex, so that Rev can return to the nucleus for a subsequent round of export. Beside KPNB1, also seems to interact with TNPO1/Transportin-1, RANBP5/IPO5 and IPO7/RANBP7 for nuclear import. The nucleoporin-like HRB/RIP is an essential cofactor that probably indirectly interacts with Rev to release HIV RNAs from the perinuclear region to the cytoplasm. The sequence is that of Protein Rev from Simian immunodeficiency virus (isolate MB66) (SIV-cpz).